Reading from the N-terminus, the 321-residue chain is Glucokinase (321 aa).

Position 8-13 (8-13) interacts with ATP; the sequence is GDVGGT.

It belongs to the bacterial glucokinase family.

The protein localises to the cytoplasm. It carries out the reaction D-glucose + ATP = D-glucose 6-phosphate + ADP + H(+). The chain is Glucokinase from Klebsiella pneumoniae (strain 342).